The chain runs to 739 residues: Thiamine biosynthesis multifunctional protein ThiED (739 aa).

The interval 1-210 is thiamine-phosphate synthase; sequence MTDFSLYLVT…PSPAEAAREL (210 aa). 4-amino-2-methyl-5-(diphosphooxymethyl)pyrimidine-binding positions include 37–41 and Asn-69; that span reads QLRDK. The Mg(2+) site is built by Asp-70 and Asp-88. Thr-107 contributes to the 4-amino-2-methyl-5-(diphosphooxymethyl)pyrimidine binding site. 140 to 142 is a 2-[(2R,5Z)-2-carboxy-4-methylthiazol-5(2H)-ylidene]ethyl phosphate binding site; sequence TDT. Residue Lys-143 participates in 4-amino-2-methyl-5-(diphosphooxymethyl)pyrimidine binding. 2-[(2R,5Z)-2-carboxy-4-methylthiazol-5(2H)-ylidene]ethyl phosphate contacts are provided by residues Gly-174 and 194–195; that span reads VS. Positions 226–481 are hydroxymethylpyrimidine/phosphomethylpyrimidine kinase; sequence LTIAGTDPTG…GSGSGPVDHF (256 aa). Gln-263 serves as a coordination point for 4-amino-5-hydroxymethyl-2-methylpyrimidine. The interval 527 to 739 is thiaminase-2; the sequence is YTRALWEATG…FDQATRQGWN (213 aa).

In the N-terminal section; belongs to the thiamine-phosphate synthase family. This sequence in the central section; belongs to the ThiD family. It in the C-terminal section; belongs to the thiaminase-2 family. It depends on Mg(2+) as a cofactor.

The enzyme catalyses 2-[(2R,5Z)-2-carboxy-4-methylthiazol-5(2H)-ylidene]ethyl phosphate + 4-amino-2-methyl-5-(diphosphooxymethyl)pyrimidine + 2 H(+) = thiamine phosphate + CO2 + diphosphate. It carries out the reaction 2-(2-carboxy-4-methylthiazol-5-yl)ethyl phosphate + 4-amino-2-methyl-5-(diphosphooxymethyl)pyrimidine + 2 H(+) = thiamine phosphate + CO2 + diphosphate. It catalyses the reaction 4-methyl-5-(2-phosphooxyethyl)-thiazole + 4-amino-2-methyl-5-(diphosphooxymethyl)pyrimidine + H(+) = thiamine phosphate + diphosphate. The catalysed reaction is 4-amino-5-hydroxymethyl-2-methylpyrimidine + ATP = 4-amino-2-methyl-5-(phosphooxymethyl)pyrimidine + ADP + H(+). The enzyme catalyses 4-amino-2-methyl-5-(phosphooxymethyl)pyrimidine + ATP = 4-amino-2-methyl-5-(diphosphooxymethyl)pyrimidine + ADP. It participates in cofactor biosynthesis; thiamine diphosphate biosynthesis; 4-amino-2-methyl-5-diphosphomethylpyrimidine from 5-amino-1-(5-phospho-D-ribosyl)imidazole: step 3/3. The protein operates within cofactor biosynthesis; thiamine diphosphate biosynthesis; thiamine phosphate from 4-amino-2-methyl-5-diphosphomethylpyrimidine and 4-methyl-5-(2-phosphoethyl)-thiazole: step 1/1. Its function is as follows. Condenses 4-methyl-5-(beta-hydroxyethyl)thiazole monophosphate (THZ-P) and 2-methyl-4-amino-5-hydroxymethyl pyrimidine pyrophosphate (HMP-PP) to form thiamine monophosphate (TMP). Catalyzes the phosphorylation of hydroxymethylpyrimidine phosphate (HMP-P) to HMP-PP, and of HMP to HMP-P. The protein is Thiamine biosynthesis multifunctional protein ThiED (thiED) of Corynebacterium efficiens (strain DSM 44549 / YS-314 / AJ 12310 / JCM 11189 / NBRC 100395).